Reading from the N-terminus, the 396-residue chain is uncharacterized protein (396 aa).

The next 2 helical transmembrane spans lie at 27 to 47 (LLIACLFISGSLSIVVFQICL) and 69 to 89 (FIVLLCMILNMVAPSSLNVTF). The HXXXXD motif motif lies at 117 to 122 (HQMYAD). 2 helical membrane passes run 123-143 (WIYLWWLSFVSNLGGNVYIIL) and 372-392 (LTPRILSYYGFFAFLILVFVM).

Belongs to the 1-acyl-sn-glycerol-3-phosphate acyltransferase family.

The protein localises to the membrane. This is an uncharacterized protein from Saccharomyces cerevisiae (strain ATCC 204508 / S288c) (Baker's yeast).